Reading from the N-terminus, the 340-residue chain is Large ribosomal subunit protein uL29m (340 aa).

The span at M1 to V10 shows a compositional bias: polar residues. The interval M1 to P22 is disordered.

The protein belongs to the universal ribosomal protein uL29 family. As to quaternary structure, component of the mitochondrial large ribosomal subunit. Mature mitochondrial ribosomes consist of a small (37S) and a large (54S) subunit. The 37S subunit contains at least 33 different proteins and 1 molecule of RNA (15S). The 54S subunit contains at least 45 different proteins and 1 molecule of RNA (21S).

Its subcellular location is the mitochondrion. The sequence is that of Large ribosomal subunit protein uL29m (MRPL4) from Yarrowia lipolytica (strain CLIB 122 / E 150) (Yeast).